The chain runs to 203 residues: MTSAVGTSGTAITSRVHSLNRPNMVSVGTIVWLSSELMFFAGLFAMYFTARAQSGGKWPPPPTELNLYQAVPVTLVLIASSFTCQMGVFAAERGDVFGLRRWYVITFLMGLFFVLGQGYEYYHLMGHGTTIPGSAYGSVFYLATGFHDLHVTGGLVAFIFLLARTAMSKFTPAQATASIVVSYYWHFVDIVWIALFTVIYFIR.

Helical transmembrane passes span 30–50 (IVWLSSELMFFAGLFAMYFTA), 70–90 (AVPVTLVLIASSFTCQMGVFA), 102–122 (WYVITFLMGLFFVLGQGYEYY), 142–162 (LATGFHDLHVTGGLVAFIFLL), and 179–199 (IVVSYYWHFVDIVWIALFTVI).

It belongs to the cytochrome c oxidase subunit 3 family.

It localises to the cell membrane. The enzyme catalyses 4 Fe(II)-[cytochrome c] + O2 + 8 H(+)(in) = 4 Fe(III)-[cytochrome c] + 2 H2O + 4 H(+)(out). The sequence is that of Probable cytochrome c oxidase subunit 3 (ctaE) from Mycolicibacterium paratuberculosis (strain ATCC BAA-968 / K-10) (Mycobacterium paratuberculosis).